The following is a 333-amino-acid chain: Phenylalanine--tRNA ligase alpha subunit (333 aa).

Residue glutamate 248 coordinates Mg(2+).

Belongs to the class-II aminoacyl-tRNA synthetase family. Phe-tRNA synthetase alpha subunit type 1 subfamily. As to quaternary structure, tetramer of two alpha and two beta subunits. It depends on Mg(2+) as a cofactor.

The protein resides in the cytoplasm. The catalysed reaction is tRNA(Phe) + L-phenylalanine + ATP = L-phenylalanyl-tRNA(Phe) + AMP + diphosphate + H(+). The protein is Phenylalanine--tRNA ligase alpha subunit of Ureaplasma urealyticum serovar 10 (strain ATCC 33699 / Western).